The sequence spans 251 residues: Octanoyltransferase (251 aa).

Positions 56–241 constitute a BPL/LPL catalytic domain; that stretch reads ADTGDEIWVV…NLDGASAAAD (186 aa). Residues 96–103, 168–170, and 181–183 contribute to the substrate site; these read RGGQITYH, ALG, and GLS. Cys-199 serves as the catalytic Acyl-thioester intermediate.

This sequence belongs to the LipB family.

The protein resides in the cytoplasm. It carries out the reaction octanoyl-[ACP] + L-lysyl-[protein] = N(6)-octanoyl-L-lysyl-[protein] + holo-[ACP] + H(+). The protein operates within protein modification; protein lipoylation via endogenous pathway; protein N(6)-(lipoyl)lysine from octanoyl-[acyl-carrier-protein]: step 1/2. In terms of biological role, catalyzes the transfer of endogenously produced octanoic acid from octanoyl-acyl-carrier-protein onto the lipoyl domains of lipoate-dependent enzymes. Lipoyl-ACP can also act as a substrate although octanoyl-ACP is likely to be the physiological substrate. The polypeptide is Octanoyltransferase (Burkholderia cenocepacia (strain HI2424)).